The primary structure comprises 426 residues: Glutamate-1-semialdehyde 2,1-aminomutase (426 aa).

Position 268 is an N6-(pyridoxal phosphate)lysine (Lys268).

It belongs to the class-III pyridoxal-phosphate-dependent aminotransferase family. HemL subfamily. The cofactor is pyridoxal 5'-phosphate.

It localises to the cytoplasm. It catalyses the reaction (S)-4-amino-5-oxopentanoate = 5-aminolevulinate. It functions in the pathway porphyrin-containing compound metabolism; protoporphyrin-IX biosynthesis; 5-aminolevulinate from L-glutamyl-tRNA(Glu): step 2/2. This Saccharolobus islandicus (strain Y.N.15.51 / Yellowstone #2) (Sulfolobus islandicus) protein is Glutamate-1-semialdehyde 2,1-aminomutase.